The primary structure comprises 321 residues: Phospho-N-acetylmuramoyl-pentapeptide-transferase (321 aa).

A run of 10 helical transmembrane segments spans residues 1–21 (MIYVLAIIAFLITLILVPILI), 49–69 (TMGGLTFLISIIITTIIAIIF), 77–97 (ILLLFVTVGFGLIGFVDDYII), 112–132 (FLAQIAIAVIFFILSDVFNMI), 140–160 (IPFTNVSIPLSVVYVVFIVFW), 176–196 (GLATGLSIIAFAMYAIMSFML), 200–220 (AVGTFCIIMVFALLGFLIYNV), 225–245 (VFMGDTGSLALGGIIATVSIM), 250–270 (ISLIFIGFVFVAETLSVILQV), and 300–320 (VVSVFWIVGLITGLIGLWIGV).

Belongs to the glycosyltransferase 4 family. MraY subfamily. Mg(2+) is required as a cofactor.

The protein localises to the cell membrane. The catalysed reaction is UDP-N-acetyl-alpha-D-muramoyl-L-alanyl-gamma-D-glutamyl-L-lysyl-D-alanyl-D-alanine + di-trans,octa-cis-undecaprenyl phosphate = Mur2Ac(oyl-L-Ala-gamma-D-Glu-L-Lys-D-Ala-D-Ala)-di-trans,octa-cis-undecaprenyl diphosphate + UMP. It participates in cell wall biogenesis; peptidoglycan biosynthesis. Catalyzes the initial step of the lipid cycle reactions in the biosynthesis of the cell wall peptidoglycan: transfers peptidoglycan precursor phospho-MurNAc-pentapeptide from UDP-MurNAc-pentapeptide onto the lipid carrier undecaprenyl phosphate, yielding undecaprenyl-pyrophosphoryl-MurNAc-pentapeptide, known as lipid I. The sequence is that of Phospho-N-acetylmuramoyl-pentapeptide-transferase from Staphylococcus carnosus (strain TM300).